Here is a 291-residue protein sequence, read N- to C-terminus: tRNA dimethylallyltransferase (291 aa).

5-12 contacts ATP; the sequence is GPTAGGKS. 7–12 is a substrate binding site; the sequence is TAGGKS. An interaction with substrate tRNA region spans residues 30–33; the sequence is DSMQ.

This sequence belongs to the IPP transferase family. Monomer. Mg(2+) is required as a cofactor.

It carries out the reaction adenosine(37) in tRNA + dimethylallyl diphosphate = N(6)-dimethylallyladenosine(37) in tRNA + diphosphate. Its function is as follows. Catalyzes the transfer of a dimethylallyl group onto the adenine at position 37 in tRNAs that read codons beginning with uridine, leading to the formation of N6-(dimethylallyl)adenosine (i(6)A). The sequence is that of tRNA dimethylallyltransferase from Frankia casuarinae (strain DSM 45818 / CECT 9043 / HFP020203 / CcI3).